The following is a 602-amino-acid chain: Oligoendopeptidase F, chromosomal (602 aa).

H388 serves as a coordination point for Zn(2+). E389 is an active-site residue. H392 and H395 together coordinate Zn(2+).

Belongs to the peptidase M3B family. Zn(2+) is required as a cofactor.

In terms of biological role, hydrolyzes peptides containing between 7 and 17 amino acids with a rather wide specificity. This is Oligoendopeptidase F, chromosomal (pepF2) from Lactococcus lactis subsp. cremoris (Streptococcus cremoris).